The sequence spans 211 residues: Thiamine-phosphate synthase (211 aa).

4-amino-2-methyl-5-(diphosphooxymethyl)pyrimidine-binding positions include 37-41 (QLRIK) and Asn-69. The Mg(2+) site is built by Asp-70 and Asp-89. Residue Ser-108 participates in 4-amino-2-methyl-5-(diphosphooxymethyl)pyrimidine binding. 134 to 136 (TQT) contributes to the 2-[(2R,5Z)-2-carboxy-4-methylthiazol-5(2H)-ylidene]ethyl phosphate binding site. Residue Lys-137 participates in 4-amino-2-methyl-5-(diphosphooxymethyl)pyrimidine binding. 2-[(2R,5Z)-2-carboxy-4-methylthiazol-5(2H)-ylidene]ethyl phosphate-binding positions include Gly-166 and 186–187 (VS).

This sequence belongs to the thiamine-phosphate synthase family. The cofactor is Mg(2+).

It carries out the reaction 2-[(2R,5Z)-2-carboxy-4-methylthiazol-5(2H)-ylidene]ethyl phosphate + 4-amino-2-methyl-5-(diphosphooxymethyl)pyrimidine + 2 H(+) = thiamine phosphate + CO2 + diphosphate. The catalysed reaction is 2-(2-carboxy-4-methylthiazol-5-yl)ethyl phosphate + 4-amino-2-methyl-5-(diphosphooxymethyl)pyrimidine + 2 H(+) = thiamine phosphate + CO2 + diphosphate. It catalyses the reaction 4-methyl-5-(2-phosphooxyethyl)-thiazole + 4-amino-2-methyl-5-(diphosphooxymethyl)pyrimidine + H(+) = thiamine phosphate + diphosphate. It participates in cofactor biosynthesis; thiamine diphosphate biosynthesis; thiamine phosphate from 4-amino-2-methyl-5-diphosphomethylpyrimidine and 4-methyl-5-(2-phosphoethyl)-thiazole: step 1/1. Condenses 4-methyl-5-(beta-hydroxyethyl)thiazole monophosphate (THZ-P) and 2-methyl-4-amino-5-hydroxymethyl pyrimidine pyrophosphate (HMP-PP) to form thiamine monophosphate (TMP). In Escherichia coli O6:H1 (strain CFT073 / ATCC 700928 / UPEC), this protein is Thiamine-phosphate synthase.